The sequence spans 149 residues: Small ribosomal subunit protein bS6 (149 aa).

The disordered stretch occupies residues 94-149 (EKHEEGPSAMMQKRDRDDRPRRDGDRPDRGGFGDRGPRPDRGDRDDRPRRPREDRA).

This sequence belongs to the bacterial ribosomal protein bS6 family.

Its function is as follows. Binds together with bS18 to 16S ribosomal RNA. In Sinorhizobium fredii (strain NBRC 101917 / NGR234), this protein is Small ribosomal subunit protein bS6.